The sequence spans 150 residues: Large ribosomal subunit protein eL19 (150 aa).

A disordered region spans residues 59–89 (SRYRARIRHEQKKKGRHRGPGSRKGKKTARM). The segment covering 61-89 (YRARIRHEQKKKGRHRGPGSRKGKKTARM) has biased composition (basic residues).

Belongs to the eukaryotic ribosomal protein eL19 family. As to quaternary structure, part of the 50S ribosomal subunit.

Binds to the 23S rRNA. The protein is Large ribosomal subunit protein eL19 of Pyrococcus horikoshii (strain ATCC 700860 / DSM 12428 / JCM 9974 / NBRC 100139 / OT-3).